The sequence spans 399 residues: Phosphoglycerate kinase (399 aa).

Residues 24–26, arginine 41, 64–67, arginine 123, and arginine 160 each bind substrate; these read DLN and HLGR. ATP-binding positions include lysine 210, glycine 298, glutamate 329, and 355-358; that span reads GGDS.

This sequence belongs to the phosphoglycerate kinase family. As to quaternary structure, monomer.

The protein localises to the cytoplasm. It carries out the reaction (2R)-3-phosphoglycerate + ATP = (2R)-3-phospho-glyceroyl phosphate + ADP. It functions in the pathway carbohydrate degradation; glycolysis; pyruvate from D-glyceraldehyde 3-phosphate: step 2/5. The chain is Phosphoglycerate kinase from Salinispora arenicola (strain CNS-205).